Reading from the N-terminus, the 94-residue chain is DNA-directed RNA polymerase subunit omega (94 aa).

Belongs to the RNA polymerase subunit omega family. In terms of assembly, the RNAP catalytic core consists of 2 alpha, 1 beta, 1 beta' and 1 omega subunit. When a sigma factor is associated with the core the holoenzyme is formed, which can initiate transcription.

It catalyses the reaction RNA(n) + a ribonucleoside 5'-triphosphate = RNA(n+1) + diphosphate. Functionally, promotes RNA polymerase assembly. Latches the N- and C-terminal regions of the beta' subunit thereby facilitating its interaction with the beta and alpha subunits. The sequence is that of DNA-directed RNA polymerase subunit omega from Frankia alni (strain DSM 45986 / CECT 9034 / ACN14a).